The following is a 200-amino-acid chain: Recombination protein RecR (200 aa).

A C4-type zinc finger spans residues Cys59 to Cys74. In terms of domain architecture, Toprim spans Arg82 to Pro177.

The protein belongs to the RecR family.

Its function is as follows. May play a role in DNA repair. It seems to be involved in an RecBC-independent recombinational process of DNA repair. It may act with RecF and RecO. This Caulobacter sp. (strain K31) protein is Recombination protein RecR.